The following is a 533-amino-acid chain: Glucose-6-phosphate isomerase (533 aa).

The Proton donor role is filled by E341. Residues H372 and K501 contribute to the active site.

Belongs to the GPI family.

The protein resides in the cytoplasm. The enzyme catalyses alpha-D-glucose 6-phosphate = beta-D-fructose 6-phosphate. The protein operates within carbohydrate biosynthesis; gluconeogenesis. It functions in the pathway carbohydrate degradation; glycolysis; D-glyceraldehyde 3-phosphate and glycerone phosphate from D-glucose: step 2/4. Functionally, catalyzes the reversible isomerization of glucose-6-phosphate to fructose-6-phosphate. This is Glucose-6-phosphate isomerase from Cereibacter sphaeroides (strain ATCC 17029 / ATH 2.4.9) (Rhodobacter sphaeroides).